Consider the following 358-residue polypeptide: Nicotinate-nucleotide--dimethylbenzimidazole phosphoribosyltransferase (358 aa).

The active-site Proton acceptor is E313.

The protein belongs to the CobT family.

It carries out the reaction 5,6-dimethylbenzimidazole + nicotinate beta-D-ribonucleotide = alpha-ribazole 5'-phosphate + nicotinate + H(+). It participates in nucleoside biosynthesis; alpha-ribazole biosynthesis; alpha-ribazole from 5,6-dimethylbenzimidazole: step 1/2. Catalyzes the synthesis of alpha-ribazole-5'-phosphate from nicotinate mononucleotide (NAMN) and 5,6-dimethylbenzimidazole (DMB). The sequence is that of Nicotinate-nucleotide--dimethylbenzimidazole phosphoribosyltransferase from Corynebacterium glutamicum (strain ATCC 13032 / DSM 20300 / JCM 1318 / BCRC 11384 / CCUG 27702 / LMG 3730 / NBRC 12168 / NCIMB 10025 / NRRL B-2784 / 534).